A 422-amino-acid polypeptide reads, in one-letter code: L-threonine dehydratase biosynthetic IlvA (422 aa).

An N6-(pyridoxal phosphate)lysine modification is found at Lys56. Residues Asn83, 189–193 (GGGGL), and Ser315 contribute to the pyridoxal 5'-phosphate site. An ACT-like domain is found at 339 to 413 (HYFILNFPQR…FDPSNIYINE (75 aa)).

The protein belongs to the serine/threonine dehydratase family. As to quaternary structure, homotetramer. Pyridoxal 5'-phosphate is required as a cofactor.

The enzyme catalyses L-threonine = 2-oxobutanoate + NH4(+). Its pathway is amino-acid biosynthesis; L-isoleucine biosynthesis; 2-oxobutanoate from L-threonine: step 1/1. Catalyzes the anaerobic formation of alpha-ketobutyrate and ammonia from threonine in a two-step reaction. The first step involved a dehydration of threonine and a production of enamine intermediates (aminocrotonate), which tautomerizes to its imine form (iminobutyrate). Both intermediates are unstable and short-lived. The second step is the nonenzymatic hydrolysis of the enamine/imine intermediates to form 2-ketobutyrate and free ammonia. In the low water environment of the cell, the second step is accelerated by RidA. The polypeptide is L-threonine dehydratase biosynthetic IlvA (ilvA) (Staphylococcus epidermidis (strain ATCC 12228 / FDA PCI 1200)).